A 295-amino-acid polypeptide reads, in one-letter code: MSSLPVSESEGEGSGTSVQVPSRGGQVTPGEKAFSLRTKHVFLTYPRCPISPEEAGQKIADRLKNKKCNYIYISREFHADGEPHLHAFVQLEANFRTTSPKYFDLDEFHPNIQAARQPASTLKYCMKHPESSWEFGKFLKPKVNRSPTQSASRDKTMKQIMANATSRDEYLSMVRKSFPFEWAVRLQQFQYSANALFPDPPQTYSAPYASRDMSDHPVIGEWLQQELYTVSPQALSLHAGISEEQARIDLQWMSDLTRSGALESGDEACTSVGQQELERLLGPEVLELITTGSTQ.

The segment at methionine 1 to glutamate 31 is disordered. In terms of domain architecture, CRESS-DNA virus Rep endonuclease spans serine 35–phenylalanine 138. The RCR-1 motif lies at phenylalanine 42–tyrosine 45. Positions 76, 84, and 86 each coordinate a divalent metal cation. The short motif at histidine 84–histidine 86 is the RCR-2 element. Tyrosine 124 serves as the catalytic For DNA cleavage activity. Positions tyrosine 124–lysine 127 match the RCR-3 motif. Positions serine 192–tyrosine 204 are oligomerization.

Belongs to the geminiviridae Rep protein family. In terms of assembly, homooligomer. Part of the C- and V-complexes which are RepA-Rep-DNA complexes involved in the c-sense and v-sense transcription.

It is found in the host nucleus. Its subcellular location is the host cytoplasm. Functionally, implicated in enhancement of V-sense gene expression. Acts a an inhibitor of C-sense gene transcription. This is Replication-associated protein A from Avena sativa (Oat).